Consider the following 72-residue polypeptide: Small ribosomal subunit protein bS18 (72 aa).

The protein belongs to the bacterial ribosomal protein bS18 family. As to quaternary structure, part of the 30S ribosomal subunit. Forms a tight heterodimer with protein bS6.

Binds as a heterodimer with protein bS6 to the central domain of the 16S rRNA, where it helps stabilize the platform of the 30S subunit. The chain is Small ribosomal subunit protein bS18 from Francisella tularensis subsp. holarctica (strain OSU18).